The sequence spans 370 residues: tRNA-specific 2-thiouridylase MnmA (370 aa).

Residues 9-16 (GMSGGVDS) and Met-35 contribute to the ATP site. The interaction with target base in tRNA stretch occupies residues 95–97 (NPD). Catalysis depends on Cys-100, which acts as the Nucleophile. Cys-100 and Cys-196 form a disulfide bridge. Gly-124 contacts ATP. The interaction with tRNA stretch occupies residues 146 to 148 (KDQ). Cys-196 acts as the Cysteine persulfide intermediate in catalysis. Positions 308 to 309 (RY) are interaction with tRNA.

Belongs to the MnmA/TRMU family.

The protein resides in the cytoplasm. The catalysed reaction is S-sulfanyl-L-cysteinyl-[protein] + uridine(34) in tRNA + AH2 + ATP = 2-thiouridine(34) in tRNA + L-cysteinyl-[protein] + A + AMP + diphosphate + H(+). Catalyzes the 2-thiolation of uridine at the wobble position (U34) of tRNA, leading to the formation of s(2)U34. This Ralstonia nicotianae (strain ATCC BAA-1114 / GMI1000) (Ralstonia solanacearum) protein is tRNA-specific 2-thiouridylase MnmA.